Consider the following 149-residue polypeptide: ER export of PMA1 protein 1 (149 aa).

Residues 1–6 (MNLYGY) are Lumenal-facing. The helical; Signal-anchor for type II membrane protein transmembrane segment at 7-27 (FLLLIIVIAFIALLPLFSGIG) threads the bilayer. Topologically, residues 28–149 (TFKLTKPKSS…KKNEAYEGFV (122 aa)) are cytoplasmic.

In terms of assembly, interacts with PMA1 and PSG1.

The protein localises to the endoplasmic reticulum membrane. The protein resides in the cytoplasmic vesicle. It is found in the COPI-coated vesicle membrane. It localises to the COPII-coated vesicle membrane. Its subcellular location is the golgi apparatus membrane. Functionally, specific cargo receptor protein for the plasma membrane ATPase PMA1 that acts with PSG1 to promote the transport and maturation of PMA1. EXP1 and PSG1 probably act sequentially to promote PMA1 sorting between the ER and the Golgi, with EXP1 promoting PMA1 export from the ER to the Golgi while PSG1 has a role in PMA1 maturation or quality control in the Golgi. This chain is ER export of PMA1 protein 1, found in Saccharomyces cerevisiae (strain ATCC 204508 / S288c) (Baker's yeast).